Here is a 974-residue protein sequence, read N- to C-terminus: Probable proton ATPase 1B (974 aa).

Over residues 1–23 (MSSKKYELDAAAFEDKPESHSDA) the composition is skewed to basic and acidic residues. The tract at residues 1-61 (MSSKKYELDA…ATDLLPPSKG (61 aa)) is disordered. 4 helical membrane-spanning segments follow: residues 93–112 (GLWGPMPAALWIAIIIEFAL), 118–137 (GAILFAIQIANATIGWYETI), 265–286 (VMLALCAISFILCMCCFIYLLA), and 295–321 (ALQFAVVVLVVSIPIALEIVVTTTLAV). The active-site 4-aspartylphosphate intermediate is the Asp-351. A run of 6 helical transmembrane segments spans residues 631–651 (AAADMVLTEPGLSVVVEAMLV), 662–684 (FLTYRISATLQLVCFFFIACFSL), 698–712 (FFHLPVLMFMLITLL), 738–761 (VVFVSASILAAVACGSSLMLLWIG), 813–840 (FFFYVPPSPILFCGAIISLLVSTMAASF), and 869–887 (VWIYCIVWWFVQDVVKVLA). The segment at 952–974 (REDTHVLNESTSPVNAFSPKVKK) is disordered.

Belongs to the cation transport ATPase (P-type) (TC 3.A.3) family. Type IIIA subfamily.

The protein resides in the membrane. It carries out the reaction ATP + H2O + H(+)(in) = ADP + phosphate + 2 H(+)(out). The chain is Probable proton ATPase 1B (H1B) from Leishmania donovani.